Consider the following 420-residue polypeptide: Polymerase delta-interacting protein 3 (420 aa).

A2 carries the post-translational modification N-acetylalanine. Residue S5 is modified to Phosphoserine. An Omega-N-methylarginine modification is found at R33. S127 carries the phosphoserine modification. T140 bears the Phosphothreonine mark. Residue K200 forms a Glycyl lysine isopeptide (Lys-Gly) (interchain with G-Cter in SUMO2) linkage. Phosphoserine occurs at positions 215 and 217. A Glycyl lysine isopeptide (Lys-Gly) (interchain with G-Cter in SUMO2) cross-link involves residue K223. Residue S244 is modified to Phosphoserine. A Glycyl lysine isopeptide (Lys-Gly) (interchain with G-Cter in SUMO2) cross-link involves residue K248. Residues 256–277 (TLVNKEEPPKELPPAEPVLSPL) form a disordered region. Position 275 is a phosphoserine (S275). One can recognise an RRM domain in the interval 280–351 (TKMTVNNLHP…QPMKCNLHMN (72 aa)). Positions 369–394 (PSVKKESELPRRGNPASSNPPAEVDP) are disordered. Positions 370 to 379 (SVKKESELPR) are enriched in basic and acidic residues. A Glycyl lysine isopeptide (Lys-Gly) (interchain with G-Cter in SUMO2) cross-link involves residue K372. S385 carries the phosphoserine modification. K417 participates in a covalent cross-link: Glycyl lysine isopeptide (Lys-Gly) (interchain with G-Cter in SUMO2).

As to quaternary structure, interacts with POLD2. Interacts with NCBP1 and EIF4A3. Associates with the multiprotein exon junction complex (EJC). Interacts with RPS6KB1 (activated). Interacts with ERH. Interacts with THOC2, DDX39B and ZC3H11A; the interactions are ATP-dependent and indicative for an association with the TREX complex.

The protein resides in the nucleus. It is found in the nucleus speckle. Its subcellular location is the cytoplasm. In terms of biological role, is involved in regulation of translation. Is preferentially associated with CBC-bound spliced mRNA-protein complexes during the pioneer round of mRNA translation. Contributes to enhanced translational efficiency of spliced over nonspliced mRNAs. Recruits activated ribosomal protein S6 kinase beta-1 I/RPS6KB1 to newly synthesized mRNA. Involved in nuclear mRNA export; probably mediated by association with the TREX complex. This chain is Polymerase delta-interacting protein 3 (Poldip3), found in Mus musculus (Mouse).